The primary structure comprises 174 residues: Probable N-acetyltransferase Rv2775 (174 aa).

Positions Ile-6–Pro-172 constitute an N-acetyltransferase domain.

This sequence belongs to the acetyltransferase family.

The sequence is that of Probable N-acetyltransferase Rv2775 from Mycobacterium tuberculosis (strain ATCC 25618 / H37Rv).